A 1469-amino-acid polypeptide reads, in one-letter code: ATP-binding cassette transporter abc4 (1469 aa).

8 helical membrane-spanning segments follow: residues 21 to 40 (SLYYSLSDFSLSAISIFPTH), 55 to 74 (YSLESGLVCLYLYLIYRWIT), 94 to 114 (HGILLWLLSILFLGMTAFMFV), 121 to 141 (AFSDPPVKICLLAYSVHLFLL), 160 to 180 (VLLNLLLLPPIFHFYSYPFFF), 189 to 209 (YSPFLWFYFFITIVGNFIPLF), 296 to 316 (ILGMGVSSFMVSVCQFLSPIA), and 337 to 357 (WIVLLLTGPFLTSLFTQFYLF). The ABC transmembrane type-1 1 domain maps to 296–580 (ILGMGVSSFM…IAYLMRQIVQ (285 aa)). Asn-386 carries N-linked (GlcNAc...) asparagine glycosylation. 2 helical membrane-spanning segments follow: residues 412-432 (EFIHIIVRAPVEIAGSIYLLQ) and 441-461 (VGLALTVLTCSVPIVLGPLVA). The N-linked (GlcNAc...) asparagine glycan is linked to Asn-510. The next 2 helical transmembrane spans lie at 524-544 (VLVESLPVFSMFATFVVFTTI) and 553-573 (IAFTSISLFSFIRTQFSWIAY). The 230-residue stretch at 611-840 (IGFFNASLTW…LAEQAASASE (230 aa)) folds into the ABC transporter 1 domain. N-linked (GlcNAc...) asparagine glycosylation occurs at Asn-615. ATP is bound at residue 648–655 (GPTGSGKS). Residues Asn-691, Asn-790, and Asn-815 are each glycosylated (N-linked (GlcNAc...) asparagine). The chain crosses the membrane as a helical span at residues 894 to 914 (GFYVAAVLLFFVTTQATSILI). An ABC transmembrane type-1 2 domain is found at 897–1176 (VAAVLLFFVT…FVRSCNSLQA (280 aa)). Asn-923 is a glycosylation site (N-linked (GlcNAc...) asparagine). Residues 936–956 (FLFVYGTMLLAYSLLDFLRTV) form a helical membrane-spanning segment. N-linked (GlcNAc...) asparagine glycosylation occurs at Asn-1007. 5 consecutive transmembrane segments (helical) span residues 1009-1029 (SGWLFFSINCFLSVAGGILSV), 1033-1053 (MPIFMIPAVIVCLAGYYFGLL), 1065-1085 (ISIYTSPIFSLLGESIVGVSV), 1120-1140 (VAVRTDGISGLVGAIAGLIAL), and 1148-1168 (GVVGFSLNQAVIFSSSVLLFV). An ABC transporter 2 domain is found at 1214–1453 (FNHVSVSYSA…NGHFRRMCDG (240 aa)). Residue 1246–1253 (GRTGSGKS) coordinates ATP. N-linked (GlcNAc...) asparagine glycosylation occurs at Asn-1355.

Belongs to the ABC transporter superfamily. ABCC family. Conjugate transporter (TC 3.A.1.208) subfamily.

The protein resides in the vacuole membrane. It carries out the reaction ATP + H2O + xenobioticSide 1 = ADP + phosphate + xenobioticSide 2.. Its function is as follows. Involved in detoxification of xenobiotics, and vacuolar sequestration of glutathione S-conjugates. Together with abc2, required for accumulation of a red pigment (ade pigment) in the vacuole of a mutant affected in the adenine biosynthetic pathway. This chain is ATP-binding cassette transporter abc4, found in Schizosaccharomyces pombe (strain 972 / ATCC 24843) (Fission yeast).